A 616-amino-acid chain; its full sequence is Dihydroxy-acid dehydratase (616 aa).

Asp81 contacts Mg(2+). Residue Cys122 participates in [2Fe-2S] cluster binding. Residues Asp123 and Lys124 each coordinate Mg(2+). N6-carboxylysine is present on Lys124. Residue Cys195 coordinates [2Fe-2S] cluster. Residue Glu491 participates in Mg(2+) binding. Ser517 acts as the Proton acceptor in catalysis.

This sequence belongs to the IlvD/Edd family. Homodimer. Requires [2Fe-2S] cluster as cofactor. It depends on Mg(2+) as a cofactor.

The enzyme catalyses (2R)-2,3-dihydroxy-3-methylbutanoate = 3-methyl-2-oxobutanoate + H2O. The catalysed reaction is (2R,3R)-2,3-dihydroxy-3-methylpentanoate = (S)-3-methyl-2-oxopentanoate + H2O. The protein operates within amino-acid biosynthesis; L-isoleucine biosynthesis; L-isoleucine from 2-oxobutanoate: step 3/4. It functions in the pathway amino-acid biosynthesis; L-valine biosynthesis; L-valine from pyruvate: step 3/4. Functions in the biosynthesis of branched-chain amino acids. Catalyzes the dehydration of (2R,3R)-2,3-dihydroxy-3-methylpentanoate (2,3-dihydroxy-3-methylvalerate) into 2-oxo-3-methylpentanoate (2-oxo-3-methylvalerate) and of (2R)-2,3-dihydroxy-3-methylbutanoate (2,3-dihydroxyisovalerate) into 2-oxo-3-methylbutanoate (2-oxoisovalerate), the penultimate precursor to L-isoleucine and L-valine, respectively. This chain is Dihydroxy-acid dehydratase, found in Escherichia coli O81 (strain ED1a).